The sequence spans 787 residues: Glutamine-dependent NAD(+) synthetase (787 aa).

The CN hydrolase domain occupies 5–275 (VTVAVSTLNQ…VEVTLATIDL (271 aa)). The active-site Proton acceptor; for glutaminase activity is the E45. The active-site For glutaminase activity is K114. C175 serves as the catalytic Nucleophile; for glutaminase activity. The interval 325–787 (MHTPEEEIAL…KIKDRTGIPV (463 aa)) is ligase. 355–362 (PLSGGVDS) serves as a coordination point for ATP. Residue S357 is part of the active site. S703 is subject to Phosphoserine.

In the C-terminal section; belongs to the NAD synthetase family.

It catalyses the reaction deamido-NAD(+) + L-glutamine + ATP + H2O = L-glutamate + AMP + diphosphate + NAD(+) + H(+). It functions in the pathway cofactor biosynthesis; NAD(+) biosynthesis; NAD(+) from deamido-NAD(+) (L-Gln route): step 1/1. Its function is as follows. Catalyzes the ATP-dependent amidation of deamido-NAD to form NAD. Uses L-glutamine as a nitrogen source. Because of its role in energy metabolism, involved in the modulation of aged-related cardiac function, mobility, and lifespan. The protein is Glutamine-dependent NAD(+) synthetase of Drosophila melanogaster (Fruit fly).